A 304-amino-acid chain; its full sequence is MPTHAPAPGSGDPLGLHGVVPPVVTAFDADESLDADTTADHARMVVDAGVHGVFPLGTNGEFPLLTPSERDRVVTAVVDEVGGEVPVIAGVGAPSTRQTVAHAEHAASVGADGVVVVTPFYYPLDGTAAVEHYRRVAAAVDCPVYVYHIPSKTGNELSLETLAALAEIDTLAGVKDSSKDVPWLGQAVDAHPELTFLAGSDSLLAPGLDVGCAGLVSAVANVAPELVVGLYEAYDEGDRERARARQSTVYEVRAALKRGPYMAGVKAALGLRGFDAGPLRSPLRGLDDDDRAALEADLADLGLL.

Residues Thr58 and Tyr121 each act as charge relay system in the active site. Tyr147 functions as the Proton donor in the catalytic mechanism. The active-site Schiff-base intermediate with substrate is the Lys175.

The protein belongs to the DapA family. Homotetramer.

It is found in the cytoplasm. This is an uncharacterized protein from Halobacterium salinarum (strain ATCC 29341 / DSM 671 / R1).